A 191-amino-acid polypeptide reads, in one-letter code: Abscisic acid receptor PYR1 (191 aa).

The segment at 23–176 (YQLDPGSCSS…NLQKLATVAE (154 aa)) is START-like. Lys-59 is a binding site for abscisate. A Phosphothreonine; by CARK1 modification is found at Thr-78. The Gate loop motif lies at 85–89 (SGLPA). Residues 89-94 (ANTSTE), 116-122 (RLTNYKS), and Glu-141 contribute to the abscisate site. The short motif at 115-117 (HRL) is the Latch loop element.

The protein belongs to the PYR/PYL/RCAR abscisic acid intracellular receptor family. In terms of assembly, homodimer. Binds ABA on one subunit only. Interacts with HAB1, AHG3, ABI1 and ABI2 when complexed to ABA, and possibly with other PP2Cs. Binds to CARs protein in an ABA-independent manner, both at the plasma membrane and in the nucleus. Interacts directly with CAR1 and CAR4. Interacts with CARK1 in the cytosol. Interacts with AIP1 in an abscisic acid-dependent manner. Interacts with FREE1 (via N-terminus). Interacts with the E3 ubiquitin-protein ligase RSL1 at the plasma membrane. In terms of processing, ubiquitynated and degraded by the proteasome upon binding to the E3 ubiquitin-protein ligase RSL1 at the plasma membrane. Post-translationally, phosphorylated by CARK1 especially in response to abscisic acid (ABA); this phosphorylation promotes its stability and inhibitory ability to ABI1.

It is found in the cytoplasm. Its subcellular location is the cytosol. The protein localises to the nucleus. The protein resides in the cell membrane. It localises to the vacuole. In terms of biological role, receptor for abscisic acid (ABA) required for ABA-mediated responses such as stomatal closure and germination inhibition. Inhibits the activity of group-A protein phosphatases type 2C (PP2Cs) when activated by ABA. Can be activated by both (-)-ABA and (+)-ABA. Promotes drought tolerance. The polypeptide is Abscisic acid receptor PYR1 (Arabidopsis thaliana (Mouse-ear cress)).